We begin with the raw amino-acid sequence, 213 residues long: Large ribosomal subunit protein uL1 (213 aa).

This sequence belongs to the universal ribosomal protein uL1 family. Part of the 50S ribosomal subunit.

Probably involved in E site tRNA release. Binds directly to 23S rRNA. Functionally, protein L1 is also a translational repressor protein, it controls the translation of the L1 operon by binding to its mRNA. Thus it also controls transcription of L10 and L12 by translational coupling. Unlike the case in E.coli, where the site is in the untranslated mRNA leader, this site is within the L1 protein's structural gene. This is Large ribosomal subunit protein uL1 from Methanococcus vannielii (strain ATCC 35089 / DSM 1224 / JCM 13029 / OCM 148 / SB).